The primary structure comprises 110 residues: Large ribosomal subunit protein uL22 (110 aa).

Belongs to the universal ribosomal protein uL22 family. In terms of assembly, part of the 50S ribosomal subunit.

This protein binds specifically to 23S rRNA; its binding is stimulated by other ribosomal proteins, e.g. L4, L17, and L20. It is important during the early stages of 50S assembly. It makes multiple contacts with different domains of the 23S rRNA in the assembled 50S subunit and ribosome. Functionally, the globular domain of the protein is located near the polypeptide exit tunnel on the outside of the subunit, while an extended beta-hairpin is found that lines the wall of the exit tunnel in the center of the 70S ribosome. This is Large ribosomal subunit protein uL22 from Colwellia psychrerythraea (strain 34H / ATCC BAA-681) (Vibrio psychroerythus).